Reading from the N-terminus, the 428-residue chain is D-amino acid dehydrogenase (428 aa).

3–17 (VVILGSGVVGVASAY) serves as a coordination point for FAD.

It belongs to the DadA oxidoreductase family. It depends on FAD as a cofactor.

The catalysed reaction is a D-alpha-amino acid + A + H2O = a 2-oxocarboxylate + AH2 + NH4(+). It participates in amino-acid degradation; D-alanine degradation; NH(3) and pyruvate from D-alanine: step 1/1. Functionally, oxidative deamination of D-amino acids. The protein is D-amino acid dehydrogenase of Burkholderia multivorans (strain ATCC 17616 / 249).